The sequence spans 1517 residues: DNA-directed RNA polymerase subunit beta' (1517 aa).

Zn(2+) is bound by residues cysteine 71, cysteine 73, cysteine 86, and cysteine 89. 3 residues coordinate Mg(2+): aspartate 482, aspartate 484, and aspartate 486. The Zn(2+) site is built by cysteine 812, cysteine 886, cysteine 893, and cysteine 896.

The protein belongs to the RNA polymerase beta' chain family. The RNAP catalytic core consists of 2 alpha, 1 beta, 1 beta' and 1 omega subunit. When a sigma factor is associated with the core the holoenzyme is formed, which can initiate transcription. Requires Mg(2+) as cofactor. Zn(2+) serves as cofactor.

The catalysed reaction is RNA(n) + a ribonucleoside 5'-triphosphate = RNA(n+1) + diphosphate. Functionally, DNA-dependent RNA polymerase catalyzes the transcription of DNA into RNA using the four ribonucleoside triphosphates as substrates. The sequence is that of DNA-directed RNA polymerase subunit beta' from Campylobacter jejuni subsp. jejuni serotype O:23/36 (strain 81-176).